The sequence spans 259 residues: Eukaryotic translation initiation factor 3 subunit G-2 (259 aa).

Residues 179–257 (SAVRISNLSE…LILSVEWSKP (79 aa)) form the RRM domain.

This sequence belongs to the eIF-3 subunit G family. As to quaternary structure, component of the eukaryotic translation initiation factor 3 (eIF-3) complex. The eIF-3 complex interacts with pix.

The protein localises to the cytoplasm. RNA-binding component of the eukaryotic translation initiation factor 3 (eIF-3) complex, which is involved in protein synthesis of a specialized repertoire of mRNAs and, together with other initiation factors, stimulates binding of mRNA and methionyl-tRNAi to the 40S ribosome. The eIF-3 complex specifically targets and initiates translation of a subset of mRNAs involved in cell proliferation. This subunit can bind 18S rRNA. This Drosophila mojavensis (Fruit fly) protein is Eukaryotic translation initiation factor 3 subunit G-2.